The primary structure comprises 45 residues: Rubredoxin-1 (45 aa).

Met-1 carries the post-translational modification N-formylmethionine. Residues 1–45 (MQKYVCNVCGYEYDPAEHDNVPFDQLPDDWCCPVCGVSKDQFSPA) enclose the Rubredoxin-like domain. Positions 6, 9, 32, and 35 each coordinate Fe cation.

This sequence belongs to the rubredoxin family. The cofactor is Fe(3+).

The protein resides in the cytoplasm. Its function is as follows. Rubredoxin is a small nonheme, iron protein lacking acid-labile sulfide. Its single Fe, chelated to 4 Cys, functions as an electron acceptor and may also stabilize the conformation of the molecule. Electron acceptor for cytoplasmic lactate dehydrogenase. The chain is Rubredoxin-1 (rd1) from Desulfovibrio desulfuricans (strain ATCC 27774 / DSM 6949 / MB).